We begin with the raw amino-acid sequence, 426 residues long: Casein kinase I (426 aa).

One can recognise a Protein kinase domain in the interval Tyr9 to Val278. Residues Ile15–Ile23 and Lys38 each bind ATP. Asp128 (proton acceptor) is an active-site residue. Disordered stretches follow at residues Thr340–Asn360 and Pro377–Lys426. Positions Ser345–Asn360 are enriched in polar residues. Positions Gln386–Thr404 are enriched in low complexity. Over residues Pro414–Lys426 the composition is skewed to polar residues.

This sequence belongs to the protein kinase superfamily. CK1 Ser/Thr protein kinase family. Casein kinase I subfamily. Monomer. Autophosphorylated.

It is found in the cytoplasm. The protein localises to the nucleus. It catalyses the reaction L-seryl-[protein] + ATP = O-phospho-L-seryl-[protein] + ADP + H(+). The catalysed reaction is L-threonyl-[protein] + ATP = O-phospho-L-threonyl-[protein] + ADP + H(+). In terms of biological role, casein kinases are operationally defined by their preferential utilization of acidic proteins such as caseins as substrates. Can phosphorylate a large number of proteins. May have a role in DNA repair mechanism and support vegetative growth of the cells. The polypeptide is Casein kinase I (cak1-1) (Dictyostelium discoideum (Social amoeba)).